Here is a 155-residue protein sequence, read N- to C-terminus: Ribonuclease H (155 aa).

Positions 1-142 (MLKQVEIFTD…CDELARAAAS (142 aa)) constitute an RNase H type-1 domain. 4 residues coordinate Mg(2+): aspartate 10, glutamate 48, aspartate 70, and aspartate 134.

It belongs to the RNase H family. Monomer. It depends on Mg(2+) as a cofactor.

The protein resides in the cytoplasm. It carries out the reaction Endonucleolytic cleavage to 5'-phosphomonoester.. In terms of biological role, endonuclease that specifically degrades the RNA of RNA-DNA hybrids. This Klebsiella pneumoniae subsp. pneumoniae (strain ATCC 700721 / MGH 78578) protein is Ribonuclease H.